Consider the following 744-residue polypeptide: Tripartite motif-containing protein 2 (744 aa).

At S10 the chain carries Phosphoserine. The RING-type zinc finger occupies 23 to 64 (CSICLERYKNPKVLPCLHTFCERCLQNYIPAHSLTLSCPVCR). The B box-type zinc finger occupies 113–154 (GKPLSCPNHDGNVMEFYCQSCETAMCRECTEGEHAEHPTVPL). Zn(2+) is bound by residues C118, H121, C141, and H146. One copy of the Filamin repeat lies at 320-421 (TTNAVASETV…IRGSPFKLKV (102 aa)). T371 is modified (phosphothreonine). Residues S375, S424, and S428 each carry the phosphoserine modification. Residues 432-462 (EGVKRRVKSPGSGHVKQKAVKRPASMYSTGK) form a disordered region. 6 NHL repeats span residues 473–516 (IFRV…FSND), 520–563 (KSRF…FSND), 564–605 (GKFK…FQPN), 609–652 (VTRF…FNQE), 656–699 (MLKF…FDGS), and 700–743 (GSFL…YRYL).

The protein belongs to the TRIM/RBCC family. In terms of assembly, forms homooligomers. Interacts with TRIM3; this interaction reduces TRIM2 activity. Interacts with myosin V; myosin V may not be a substrate for ubiquitination. Interacts with NEFL. Interacts with phosphorylated BCL2L11. Interacts with SIRPA. RING-type zinc finger-dependent and UBE2D1-dependent autoubiquitination.

The catalysed reaction is S-ubiquitinyl-[E2 ubiquitin-conjugating enzyme]-L-cysteine + [acceptor protein]-L-lysine = [E2 ubiquitin-conjugating enzyme]-L-cysteine + N(6)-ubiquitinyl-[acceptor protein]-L-lysine.. Its pathway is protein modification; protein ubiquitination. Functionally, UBE2D1-dependent E3 ubiquitin-protein ligase that mediates the ubiquitination of NEFL and of phosphorylated BCL2L11. Plays a neuroprotective function. May play a role in neuronal rapid ischemic tolerance. Plays a role in antiviral immunity and limits New World arenavirus infection independently of its ubiquitin ligase activity. The protein is Tripartite motif-containing protein 2 (Trim2) of Rattus norvegicus (Rat).